Reading from the N-terminus, the 252-residue chain is Phosphomannomutase (252 aa).

Asp-13 acts as the Nucleophile in catalysis. Asp-13 and Asp-15 together coordinate Mg(2+). Residue Asp-15 is the Proton donor/acceptor of the active site. Alpha-D-mannose 1-phosphate is bound by residues Arg-22, Arg-124, Arg-135, Arg-142, Ser-180, and Asp-182. Asp-208, Tyr-220, and Thr-225 together coordinate Mg(2+).

Belongs to the eukaryotic PMM family. Homodimer. The cofactor is Mg(2+).

Its subcellular location is the cytoplasm. It carries out the reaction alpha-D-mannose 1-phosphate = D-mannose 6-phosphate. It participates in nucleotide-sugar biosynthesis; GDP-alpha-D-mannose biosynthesis; alpha-D-mannose 1-phosphate from D-fructose 6-phosphate: step 2/2. Functionally, catalyzes the interconversion of mannose-6-phosphate to mannose-1-phosphate, the precursor for the synthesis of GDP-mannose. GDP-mannose is an essential sugar nucleotide for the synthesis of D-mannose-containing cell wall polysaccharides (galactomannans and glucomannans), glycolipids, glycoproteins and the antioxidant L-ascorbate. Can complement the yeast temperature-sensitive mutant sec53-6. The protein is Phosphomannomutase of Solanum lycopersicum (Tomato).